A 545-amino-acid chain; its full sequence is CTP synthase (545 aa).

Residues 1 to 266 (MTTRYIFVTG…DDLVVKRFGL (266 aa)) form an amidoligase domain region. Ser-14 is a binding site for CTP. A UTP-binding site is contributed by Ser-14. ATP is bound by residues 15–20 (SLGKGI) and Asp-72. The Mg(2+) site is built by Asp-72 and Glu-140. Residues 147-149 (DIE), 187-192 (KTKPTQ), and Lys-223 each bind CTP. Residues 187–192 (KTKPTQ) and Lys-223 contribute to the UTP site. 239-241 (KDV) contacts ATP. One can recognise a Glutamine amidotransferase type-1 domain in the interval 291–542 (VIGMVGKYIE…IAAASAHQKR (252 aa)). L-glutamine is bound at residue Gly-352. Cys-379 acts as the Nucleophile; for glutamine hydrolysis in catalysis. Residues 380–383 (LGMQ), Glu-403, and Arg-470 each bind L-glutamine. Catalysis depends on residues His-515 and Glu-517.

The protein belongs to the CTP synthase family. In terms of assembly, homotetramer.

It catalyses the reaction UTP + L-glutamine + ATP + H2O = CTP + L-glutamate + ADP + phosphate + 2 H(+). The enzyme catalyses L-glutamine + H2O = L-glutamate + NH4(+). It carries out the reaction UTP + NH4(+) + ATP = CTP + ADP + phosphate + 2 H(+). Its pathway is pyrimidine metabolism; CTP biosynthesis via de novo pathway; CTP from UDP: step 2/2. Allosterically activated by GTP, when glutamine is the substrate; GTP has no effect on the reaction when ammonia is the substrate. The allosteric effector GTP functions by stabilizing the protein conformation that binds the tetrahedral intermediate(s) formed during glutamine hydrolysis. Inhibited by the product CTP, via allosteric rather than competitive inhibition. In terms of biological role, catalyzes the ATP-dependent amination of UTP to CTP with either L-glutamine or ammonia as the source of nitrogen. Regulates intracellular CTP levels through interactions with the four ribonucleotide triphosphates. The polypeptide is CTP synthase (Shewanella baltica (strain OS155 / ATCC BAA-1091)).